The sequence spans 357 residues: Sulfate/thiosulfate import ATP-binding protein CysA (357 aa).

The ABC transporter domain occupies 3–237 (ITIQNLNKHF…PENAFVTEFL (235 aa)). Position 35 to 42 (35 to 42 (GPSGCGKT)) interacts with ATP.

This sequence belongs to the ABC transporter superfamily. Sulfate/tungstate importer (TC 3.A.1.6) family. As to quaternary structure, the complex is composed of two ATP-binding proteins (CysA), two transmembrane proteins (CysT and CysW) and a solute-binding protein (CysP).

Its subcellular location is the cell inner membrane. It carries out the reaction sulfate(out) + ATP + H2O = sulfate(in) + ADP + phosphate + H(+). The enzyme catalyses thiosulfate(out) + ATP + H2O = thiosulfate(in) + ADP + phosphate + H(+). Part of the ABC transporter complex CysAWTP involved in sulfate/thiosulfate import. Responsible for energy coupling to the transport system. The sequence is that of Sulfate/thiosulfate import ATP-binding protein CysA from Neisseria meningitidis serogroup A / serotype 4A (strain DSM 15465 / Z2491).